The chain runs to 1606 residues: Phosphatidylinositol 3,4,5-trisphosphate-dependent Rac exchanger 2 protein (1606 aa).

The region spanning 23–214 is the DH domain; it reads LRVCVLSELQ…KAVCSNINEA (192 aa). In terms of domain architecture, PH spans 245–361; it reads EMLMCGVLLK…WFEAILKERE (117 aa). 2 DEP domains span residues 390–464 and 491–566; these read CRQG…RFRY and SLFT…FFSD. PDZ domains follow at residues 592–671 and 677–754; these read KSLL…VLVS and TVKI…QDSI. The segment at 1581–1606 is disordered; sequence GVRDRTPQSAPRLYKLCEPPPPAGEE.

Interacts with RAC1. In terms of tissue distribution, isoform 1 is highly expressed in skeletal muscle, heart and placenta, absent from peripheral blood leukocytes. Isoform 2 is expressed in skeletal muscle, kidney, small intestine, and placenta. Isoform 3 is expressed in the heart.

Functions as a RAC1 guanine nucleotide exchange factor (GEF), activating Rac proteins by exchanging bound GDP for free GTP. Its activity is synergistically activated by phosphatidylinositol 3,4,5-trisphosphate and the beta gamma subunits of heterotrimeric G protein. Mediates the activation of RAC1 in a PI3K-dependent manner. May be an important mediator of Rac signaling, acting directly downstream of both G protein-coupled receptors and phosphoinositide 3-kinase. In Homo sapiens (Human), this protein is Phosphatidylinositol 3,4,5-trisphosphate-dependent Rac exchanger 2 protein.